A 375-amino-acid chain; its full sequence is 23S rRNA (uracil(747)-C(5))-methyltransferase RlmC (375 aa).

[4Fe-4S] cluster-binding residues include Cys-3, Cys-11, Cys-14, and Cys-87. 4 residues coordinate S-adenosyl-L-methionine: Gln-212, Phe-241, Glu-262, and Asn-307. Catalysis depends on Cys-334, which acts as the Nucleophile.

Belongs to the class I-like SAM-binding methyltransferase superfamily. RNA M5U methyltransferase family. RlmC subfamily.

The enzyme catalyses uridine(747) in 23S rRNA + S-adenosyl-L-methionine = 5-methyluridine(747) in 23S rRNA + S-adenosyl-L-homocysteine + H(+). Its function is as follows. Catalyzes the formation of 5-methyl-uridine at position 747 (m5U747) in 23S rRNA. In Shigella boydii serotype 4 (strain Sb227), this protein is 23S rRNA (uracil(747)-C(5))-methyltransferase RlmC.